Consider the following 377-residue polypeptide: MRGQRSLLLGPARLCLRLLLLLGYRRRCPPLLRGLVQRWRYGKVCLRSLLYNSFGGSDTAVDAAFEPVYWLVDNVIRWFGVVFVVLVIVLTGSIVAIAYLCVLPLILRTYSVPRLCWHFFYSHWNLILIVFHYYQAITTPPGYPPQGRNDIATVSICKKCIYPKPARTHHCSICNRCVLKMDHHCPWLNNCVGHYNHRYFFSFCFFMTLGCVYCSYGSWDLFREAYAAIEKMKQLDKNKLQAVANQTYHQTPPPTFSFRERMTHKSLVYLWFLCSSVALALGALTVWHAVLISRGETSIERHINKKERRRLQAKGRVFRNPYNYGCLDNWKVFLGVDTGRHWLTRVLLPSSHLPHGNGMSWEPPPWVTAHSASVMAV.

Topologically, residues 1–77 (MRGQRSLLLG…VYWLVDNVIR (77 aa)) are cytoplasmic. The chain crosses the membrane as a helical span at residues 78–98 (WFGVVFVVLVIVLTGSIVAIA). The Lumenal portion of the chain corresponds to 99-116 (YLCVLPLILRTYSVPRLC). A helical transmembrane segment spans residues 117–137 (WHFFYSHWNLILIVFHYYQAI). The Cytoplasmic segment spans residues 138–198 (TTPPGYPPQG…NNCVGHYNHR (61 aa)). One can recognise a DHHC domain in the interval 155–205 (SICKKCIYPKPARTHHCSICNRCVLKMDHHCPWLNNCVGHYNHRYFFSFCF). Cysteine 185 functions as the S-palmitoyl cysteine intermediate in the catalytic mechanism. A helical transmembrane segment spans residues 199-219 (YFFSFCFFMTLGCVYCSYGSW). The Lumenal segment spans residues 220–266 (DLFREAYAAIEKMKQLDKNKLQAVANQTYHQTPPPTFSFRERMTHKS). Residues 267-287 (LVYLWFLCSSVALALGALTVW) traverse the membrane as a helical segment. Topologically, residues 288–377 (HAVLISRGET…TAHSASVMAV (90 aa)) are cytoplasmic.

It belongs to the DHHC palmitoyltransferase family. In terms of assembly, interacts with ABL1. Interacts with COPS5/JAB1. As to expression, widely expressed.

Its subcellular location is the endoplasmic reticulum membrane. The enzyme catalyses L-cysteinyl-[protein] + hexadecanoyl-CoA = S-hexadecanoyl-L-cysteinyl-[protein] + CoA. Its function is as follows. Palmitoyl acyltransferase that mediates palmitoylation of proteins such as PLN and ZDHHC6. Required during embryonic heart development and cardiac function, possibly by mediating palmitoylation of PLN, thereby affecting PLN phosphorylation and homooligomerization. Also required for eye development. Palmitoylates ZDHHC6, affecting the quaternary assembly of ZDHHC6, its localization, stability and function. May play a role in DNA damage response. May be involved in apoptosis regulation. Involved in the proliferation of neural stem cells by regulating the FGF/ERK pathway. This is Palmitoyltransferase ZDHHC16 from Homo sapiens (Human).